Here is a 259-residue protein sequence, read N- to C-terminus: uncharacterized protein (259 aa).

Residues 51–173 (GKTHAKIVAN…IAVADGTDMT (123 aa)) form the HD domain.

This is an uncharacterized protein from Methanocaldococcus jannaschii (strain ATCC 43067 / DSM 2661 / JAL-1 / JCM 10045 / NBRC 100440) (Methanococcus jannaschii).